A 589-amino-acid chain; its full sequence is Phenylalanine--tRNA ligase beta subunit (589 aa).

One can recognise a B5 domain in the interval 302-379 (LAYRKEMVRA…IAYGYNNIQM (78 aa)). Residues Asp357, Asp363, Glu366, and Asp367 each coordinate Mg(2+).

This sequence belongs to the phenylalanyl-tRNA synthetase beta subunit family. Type 2 subfamily. Heterotetramer; dimer of two heterodimers formed by FARSA and FARSB. Requires Mg(2+) as cofactor.

The protein localises to the cytoplasm. It carries out the reaction tRNA(Phe) + L-phenylalanine + ATP = L-phenylalanyl-tRNA(Phe) + AMP + diphosphate + H(+). In Homo sapiens (Human), this protein is Phenylalanine--tRNA ligase beta subunit (FARSB).